We begin with the raw amino-acid sequence, 66 residues long: Kappa-flavitoxin (66 aa).

5 cysteine pairs are disulfide-bonded: Cys3–Cys21, Cys14–Cys42, Cys27–Cys31, Cys46–Cys58, and Cys59–Cys64.

The protein belongs to the three-finger toxin family. Long-chain subfamily. Kappa-neurotoxin sub-subfamily. As to quaternary structure, homo- and heterodimer; non-covalently linked. Expressed by the venom gland.

The protein localises to the secreted. In terms of biological role, postsynaptic neurotoxin that binds and inhibits neuronal nicotinic acetylcholine receptors (nAChR) with high affinity (IC(50)&lt;100 nM). Is a selective, and slowly reversible antagonist of alpha-3/CHRNA3-containing and some alpha-4/CHRNA4-containing AChRs. The chain is Kappa-flavitoxin from Bungarus flaviceps flaviceps (Red-headed krait).